The following is a 711-amino-acid chain: Cyclomaltodextrin glucanotransferase (711 aa).

Positions 1 to 31 (MRRWLSLVLSMSFVFSAIFIVSDTQKVTVEA) are cleaved as a signal peptide. An A1 region spans residues 32–165 (AGNLNKVNFT…GIKVIIDFAP (134 aa)). Ca(2+)-binding residues include aspartate 55, asparagine 57, asparagine 60, and asparagine 61. A disulfide bond links cysteine 71 and cysteine 78. Ca(2+)-binding residues include glycine 79 and aspartate 81. A substrate-binding site is contributed by 127-128 (YW). Asparagine 166 is a Ca(2+) binding site. The interval 166-229 (NHTSPASETN…NLFDLADLNH (64 aa)) is b. Histidine 167 contacts substrate. Isoleucine 217 lines the Ca(2+) pocket. Residue 220-223 (NLFD) coordinates substrate. Aspartate 226 is a Ca(2+) binding site. An A2 region spans residues 230–433 (QNPVIDRYLK…LRRNNPALAY (204 aa)). Position 254 (arginine 254) interacts with substrate. Aspartate 256 (nucleophile) is an active-site residue. 259 to 260 (KH) contributes to the substrate binding site. A Ca(2+)-binding site is contributed by histidine 260. Glutamate 284 functions as the Proton donor in the catalytic mechanism. Substrate contacts are provided by histidine 354, aspartate 398, and arginine 402. The interval 434–522 (GDTEQRWING…EVGVWAYSAT (89 aa)) is c. Residues 523–606 (ESTPIIGHVG…SAAYDNFEVL (84 aa)) are d. The region spanning 526–604 (PIIGHVGPMM…QTSAAYDNFE (79 aa)) is the IPT/TIG domain. A CBM20 domain is found at 605-711 (VLTNDQVSVR…TGKIIVDWQN (107 aa)). Residues 607-711 (TNDQVSVRFV…TGKIIVDWQN (105 aa)) form an e region.

The protein belongs to the glycosyl hydrolase 13 family. Monomer. Ca(2+) is required as a cofactor.

It localises to the secreted. It carries out the reaction Cyclizes part of a (1-&gt;4)-alpha-D-glucan chain by formation of a (1-&gt;4)-alpha-D-glucosidic bond.. This Geobacillus stearothermophilus (Bacillus stearothermophilus) protein is Cyclomaltodextrin glucanotransferase (cgt).